We begin with the raw amino-acid sequence, 254 residues long: Diphthine synthase (254 aa).

S-adenosyl-L-methionine-binding positions include aspartate 83, leucine 86, 111–112, leucine 163, and valine 205; that span reads SI.

Belongs to the diphthine synthase family. As to quaternary structure, homodimer.

It catalyses the reaction 2-[(3S)-amino-3-carboxypropyl]-L-histidyl-[translation elongation factor 2] + 3 S-adenosyl-L-methionine = diphthine-[translation elongation factor 2] + 3 S-adenosyl-L-homocysteine + 3 H(+). It functions in the pathway protein modification; peptidyl-diphthamide biosynthesis. S-adenosyl-L-methionine-dependent methyltransferase that catalyzes the trimethylation of the amino group of the modified target histidine residue in translation elongation factor 2 (EF-2), to form an intermediate called diphthine. The three successive methylation reactions represent the second step of diphthamide biosynthesis. This Pyrobaculum aerophilum (strain ATCC 51768 / DSM 7523 / JCM 9630 / CIP 104966 / NBRC 100827 / IM2) protein is Diphthine synthase.